A 598-amino-acid polypeptide reads, in one-letter code: Aspartate--tRNA(Asp/Asn) ligase (598 aa).

Glutamate 174 provides a ligand contact to L-aspartate. The segment at 198-201 is aspartate; the sequence is QQLK. Residue arginine 220 participates in L-aspartate binding. ATP-binding positions include 220–222 and glutamine 229; that span reads RDE. An L-aspartate-binding site is contributed by histidine 458. ATP is bound at residue glutamate 492. Arginine 499 serves as a coordination point for L-aspartate. Residue 544-547 coordinates ATP; sequence GIDR.

Belongs to the class-II aminoacyl-tRNA synthetase family. Type 1 subfamily. In terms of assembly, homodimer.

It localises to the cytoplasm. It carries out the reaction tRNA(Asx) + L-aspartate + ATP = L-aspartyl-tRNA(Asx) + AMP + diphosphate. Aspartyl-tRNA synthetase with relaxed tRNA specificity since it is able to aspartylate not only its cognate tRNA(Asp) but also tRNA(Asn). Reaction proceeds in two steps: L-aspartate is first activated by ATP to form Asp-AMP and then transferred to the acceptor end of tRNA(Asp/Asn). The chain is Aspartate--tRNA(Asp/Asn) ligase from Dehalococcoides mccartyi (strain ATCC BAA-2266 / KCTC 15142 / 195) (Dehalococcoides ethenogenes (strain 195)).